Reading from the N-terminus, the 420-residue chain is L-cysteine:1D-myo-inositol 2-amino-2-deoxy-alpha-D-glucopyranoside ligase (420 aa).

Cys46 provides a ligand contact to Zn(2+). L-cysteinyl-5'-AMP contacts are provided by residues Cys46–Thr49, Thr61, and Asn84–Thr86. The 'HIGH' region motif lies at Ile48–His58. Positions Glu194–Pro199 match the 'ERGGDP' region motif. Residue Trp235 participates in L-cysteinyl-5'-AMP binding. Cys239 provides a ligand contact to Zn(2+). Position 257–259 (Gly257–Asp259) interacts with L-cysteinyl-5'-AMP. His264 provides a ligand contact to Zn(2+). An L-cysteinyl-5'-AMP-binding site is contributed by Val291. Residues Lys297–Ser301 carry the 'KMSKS' region motif.

This sequence belongs to the class-I aminoacyl-tRNA synthetase family. MshC subfamily. In terms of assembly, monomer. It depends on Zn(2+) as a cofactor.

It carries out the reaction 1D-myo-inositol 2-amino-2-deoxy-alpha-D-glucopyranoside + L-cysteine + ATP = 1D-myo-inositol 2-(L-cysteinylamino)-2-deoxy-alpha-D-glucopyranoside + AMP + diphosphate + H(+). Catalyzes the ATP-dependent condensation of GlcN-Ins and L-cysteine to form L-Cys-GlcN-Ins. This is L-cysteine:1D-myo-inositol 2-amino-2-deoxy-alpha-D-glucopyranoside ligase from Beutenbergia cavernae (strain ATCC BAA-8 / DSM 12333 / CCUG 43141 / JCM 11478 / NBRC 16432 / NCIMB 13614 / HKI 0122).